Reading from the N-terminus, the 217-residue chain is Glycosylphosphatidylinositol anchor biosynthesis protein 11 (217 aa).

The next 6 membrane-spanning stretches (helical) occupy residues 45-61 (TWQTIPFHLIVLSYWFI), 74-94 (WLLVPCQVLYLALQFNPATVY), 111-131 (VTCILLTIPCMLLVVLFGAPF), 138-158 (TWLLSLHCCVLSYPAVYSVLN), 169-189 (YFISIAVGCWISCLAIPLDWD), and 195-215 (WPIPLVVGAQLGAMFGYTFCS).

Belongs to the PIGF family.

The protein resides in the endoplasmic reticulum membrane. The protein operates within glycolipid biosynthesis; glycosylphosphatidylinositol-anchor biosynthesis. In terms of biological role, acts in the GPI biosynthetic pathway between GlcNAc-PI synthesis and GPI transfer to protein. This Eremothecium gossypii (strain ATCC 10895 / CBS 109.51 / FGSC 9923 / NRRL Y-1056) (Yeast) protein is Glycosylphosphatidylinositol anchor biosynthesis protein 11 (GPI11).